The following is a 131-amino-acid chain: Large ribosomal subunit protein bL21 (131 aa).

The segment covering 106–116 (TIDDMPKKEAA) has biased composition (basic and acidic residues). The interval 106–131 (TIDDMPKKEAAPAKARRSTKKAAAAE) is disordered.

It belongs to the bacterial ribosomal protein bL21 family. As to quaternary structure, part of the 50S ribosomal subunit. Contacts protein L20.

This protein binds to 23S rRNA in the presence of protein L20. The sequence is that of Large ribosomal subunit protein bL21 from Koribacter versatilis (strain Ellin345).